The following is a 1257-amino-acid chain: LIM domain kinase 1 (1257 aa).

The tract at residues M1–P24 is disordered. Residues M1–C147 are interaction with LATS1. Gly residues predominate over residues G11–P24. LIM zinc-binding domains lie at P31 to D93 and A94 to Q154. The region spanning L174–P274 is the PDZ domain. A Protein kinase domain is found at L401 to L686. Residues L407–V415 and K430 contribute to the ATP site. The active site involves D522. Disordered stretches follow at residues L552–R587, Q759–L811, and E881–R900. Residues Q794–L811 show a composition bias toward basic and acidic residues. S1000 bears the Phosphoserine mark. Disordered regions lie at residues A1010–L1037, S1085–H1182, and A1212–C1257. 2 stretches are compositionally biased toward polar residues: residues S1085–H1095 and R1113–V1125. 2 stretches are compositionally biased toward low complexity: residues S1126 to T1137 and T1145 to Q1166.

This sequence belongs to the protein kinase superfamily. TKL Ser/Thr protein kinase family. Interacts with LATS1, and this interaction inhibits phosphorylation of tsr/cofilin. Post-translationally, phosphorylated on serine and/or threonine residues by ROCK1. Phosphorylated by PAK4 resulting in increased LIMK1 ability to phosphorylate cofilin. May be dephosphorylated and inactivated by SSH1. In terms of tissue distribution, expressed throughout the imaginal disks of the eye, leg and wing.

It localises to the cytoplasm. The protein localises to the cleavage furrow. The protein resides in the midbody. It catalyses the reaction L-seryl-[protein] + ATP = O-phospho-L-seryl-[protein] + ADP + H(+). The enzyme catalyses L-threonyl-[protein] + ATP = O-phospho-L-threonyl-[protein] + ADP + H(+). Protein kinase which regulates actin filament dynamics. Phosphorylates and inactivates the actin binding/depolymerizing factor tsr/cofilin, thereby stabilizing the actin cytoskeleton. Modulation of actin cytoskeleton dynamics may be essential for imaginal disk morphogenesis and axon guidance. The protein is LIM domain kinase 1 (LIMK1) of Drosophila melanogaster (Fruit fly).